The primary structure comprises 240 residues: Ribonuclease PH (240 aa).

Residues Arg87 and 125–127 (GTR) each bind phosphate.

This sequence belongs to the RNase PH family. In terms of assembly, homohexameric ring arranged as a trimer of dimers.

It catalyses the reaction tRNA(n+1) + phosphate = tRNA(n) + a ribonucleoside 5'-diphosphate. Phosphorolytic 3'-5' exoribonuclease that plays an important role in tRNA 3'-end maturation. Removes nucleotide residues following the 3'-CCA terminus of tRNAs; can also add nucleotides to the ends of RNA molecules by using nucleoside diphosphates as substrates, but this may not be physiologically important. Probably plays a role in initiation of 16S rRNA degradation (leading to ribosome degradation) during starvation. This Ruminiclostridium cellulolyticum (strain ATCC 35319 / DSM 5812 / JCM 6584 / H10) (Clostridium cellulolyticum) protein is Ribonuclease PH.